The following is a 41-amino-acid chain: CTTGPCCRQCKLKPAGTTCWKTSRTSHYCTGKSCDCPVYQG.

Cystine bridges form between cysteine 1–cysteine 10, cysteine 6–cysteine 29, cysteine 7–cysteine 34, and cysteine 19–cysteine 36. In terms of domain architecture, Disintegrin spans 1 to 41 (CTTGPCCRQCKLKPAGTTCWKTSRTSHYCTGKSCDCPVYQG). Positions 21-23 (KTS) match the Cell attachment site; atypical (KTS) motif.

As to quaternary structure, monomer. Expressed by the venom gland.

The protein localises to the secreted. Functionally, potent and highly selective inhibitor of alpha-1/beta-1 (ITGA1/ITGB1) integrin binding to collagen I and IV. Is about 25-fold more potent than obtustatin inhibiting the binding of this integrin to collagen IV. This chain is Disintegrin viperistatin, found in Daboia palaestinae (Palestine viper).